Consider the following 75-residue polypeptide: UPF0154 protein MYPU_1460 (75 aa).

Residues 8–28 form a helical membrane-spanning segment; it reads GLIVGLSILFFIIGGVVAFFV.

The protein belongs to the UPF0154 family.

Its subcellular location is the membrane. In Mycoplasmopsis pulmonis (strain UAB CTIP) (Mycoplasma pulmonis), this protein is UPF0154 protein MYPU_1460.